Consider the following 195-residue polypeptide: NAD(P)H-quinone oxidoreductase subunit J, chloroplastic (195 aa).

The protein belongs to the complex I 30 kDa subunit family. As to quaternary structure, NDH is composed of at least 16 different subunits, 5 of which are encoded in the nucleus.

It is found in the plastid. The protein resides in the chloroplast thylakoid membrane. It catalyses the reaction a plastoquinone + NADH + (n+1) H(+)(in) = a plastoquinol + NAD(+) + n H(+)(out). It carries out the reaction a plastoquinone + NADPH + (n+1) H(+)(in) = a plastoquinol + NADP(+) + n H(+)(out). Its function is as follows. NDH shuttles electrons from NAD(P)H:plastoquinone, via FMN and iron-sulfur (Fe-S) centers, to quinones in the photosynthetic chain and possibly in a chloroplast respiratory chain. The immediate electron acceptor for the enzyme in this species is believed to be plastoquinone. Couples the redox reaction to proton translocation, and thus conserves the redox energy in a proton gradient. In Chlorokybus atmophyticus (Soil alga), this protein is NAD(P)H-quinone oxidoreductase subunit J, chloroplastic.